The sequence spans 731 residues: Alpha-1,4-glucan:maltose-1-phosphate maltosyltransferase (731 aa).

Over residues 1–10 (MEAQHNETEA) the composition is skewed to basic and acidic residues. The interval 1–31 (MEAQHNETEAAGKPAAKKTTRTRKPRASKQA) is disordered. The segment covering 15-27 (AAKKTTRTRKPRA) has biased composition (basic residues). Positions 321, 381, and 416 each coordinate alpha-maltose 1-phosphate. Asp451 acts as the Nucleophile in catalysis. Position 452 (Asn452) interacts with alpha-maltose 1-phosphate. Glu480 acts as the Proton donor in catalysis. 590 to 591 (KF) is a binding site for alpha-maltose 1-phosphate.

This sequence belongs to the glycosyl hydrolase 13 family. GlgE subfamily. Homodimer.

The enzyme catalyses alpha-maltose 1-phosphate + [(1-&gt;4)-alpha-D-glucosyl](n) = [(1-&gt;4)-alpha-D-glucosyl](n+2) + phosphate. Its function is as follows. Maltosyltransferase that uses maltose 1-phosphate (M1P) as the sugar donor to elongate linear or branched alpha-(1-&gt;4)-glucans. Is involved in a branched alpha-glucan biosynthetic pathway from trehalose, together with TreS, Mak and GlgB. This chain is Alpha-1,4-glucan:maltose-1-phosphate maltosyltransferase, found in Bifidobacterium animalis subsp. lactis (strain Bl-04 / DGCC2908 / RB 4825 / SD5219).